The primary structure comprises 274 residues: MQFSKMHGLGNDFVVVDAVTQNIYFPTEVIKRLADRNRGIGFDQLLVVEPPYDPDLDFHYRIFNADGSEVSQCGNGARCFARFVVLKGLTNKKEIAVSTAKGKMMLCVKDDDMVCVNMGEPIWEPNKIPFNANKFEKNYIIRTDIQTLLCGVVSMGNPHCVTQVEDIQHANIEILGPLLESHERFPERVNAGFMQIINRNHIKLRVYERGAGETQACGSGACAAVAVGIMQGVLGSCVQVDLPGGRLMIEWQGKGHPLYMTGEATHIYDGVIRL.

Positions 11, 44, and 64 each coordinate substrate. The active-site Proton donor is the Cys73. Substrate contacts are provided by residues 74-75 (GN), Asn157, Asn190, and 208-209 (ER). The active-site Proton acceptor is the Cys217. 218-219 (GS) contributes to the substrate binding site.

It belongs to the diaminopimelate epimerase family. In terms of assembly, homodimer.

Its subcellular location is the cytoplasm. It catalyses the reaction (2S,6S)-2,6-diaminopimelate = meso-2,6-diaminopimelate. Its pathway is amino-acid biosynthesis; L-lysine biosynthesis via DAP pathway; DL-2,6-diaminopimelate from LL-2,6-diaminopimelate: step 1/1. Catalyzes the stereoinversion of LL-2,6-diaminopimelate (L,L-DAP) to meso-diaminopimelate (meso-DAP), a precursor of L-lysine and an essential component of the bacterial peptidoglycan. The sequence is that of Diaminopimelate epimerase from Histophilus somni (strain 2336) (Haemophilus somnus).